Reading from the N-terminus, the 2542-residue chain is Talin-2 (2542 aa).

Residues arginine 88 to lysine 406 form the FERM domain. The tract at residues glycine 312 to lysine 406 is interaction with PIP5K1C. Serine 428, serine 449, serine 623, and serine 1023 each carry phosphoserine. Phosphotyrosine is present on tyrosine 1665. Position 1843 is a phosphothreonine (threonine 1843). In terms of domain architecture, I/LWEQ spans threonine 2294–leucine 2533.

As to quaternary structure, interacts directly with PIP5K1C.

It is found in the cytoplasm. The protein resides in the cell junction. The protein localises to the focal adhesion. It localises to the synapse. Its subcellular location is the cell membrane. It is found in the cytoskeleton. Functionally, as a major component of focal adhesion plaques that links integrin to the actin cytoskeleton, may play an important role in cell adhesion. Recruits PIP5K1C to focal adhesion plaques and strongly activates its kinase activity. This chain is Talin-2 (TLN2), found in Homo sapiens (Human).